Consider the following 329-residue polypeptide: 4-hydroxythreonine-4-phosphate dehydrogenase (329 aa).

The substrate site is built by histidine 136 and threonine 137. 3 residues coordinate a divalent metal cation: histidine 166, histidine 211, and histidine 266. Positions 274, 283, and 292 each coordinate substrate.

This sequence belongs to the PdxA family. Homodimer. Requires Zn(2+) as cofactor. Mg(2+) serves as cofactor. The cofactor is Co(2+).

Its subcellular location is the cytoplasm. The catalysed reaction is 4-(phosphooxy)-L-threonine + NAD(+) = 3-amino-2-oxopropyl phosphate + CO2 + NADH. The protein operates within cofactor biosynthesis; pyridoxine 5'-phosphate biosynthesis; pyridoxine 5'-phosphate from D-erythrose 4-phosphate: step 4/5. Functionally, catalyzes the NAD(P)-dependent oxidation of 4-(phosphooxy)-L-threonine (HTP) into 2-amino-3-oxo-4-(phosphooxy)butyric acid which spontaneously decarboxylates to form 3-amino-2-oxopropyl phosphate (AHAP). The chain is 4-hydroxythreonine-4-phosphate dehydrogenase from Shigella flexneri serotype 5b (strain 8401).